The chain runs to 377 residues: SH2/SH3 adapter protein Nck1 (377 aa).

Ala2 is modified (N-acetylalanine). The SH3 1 domain maps to 2–61 (AEEVVVVAKFDYVAQQEQELDIKKNERLWLLDDSKSWWRVRNSMNKTGFVPSNYVERKNS). Phosphoserine occurs at positions 85, 91, and 96. Tyr105 carries the post-translational modification Phosphotyrosine. One can recognise an SH3 2 domain in the interval 106-165 (DLNMPAFVKFNYMAEREDELSLIKGTKVIVMEKCSDGWWRGSYNGQIGWFPSNYVTEEGD). Ser166 carries the phosphoserine modification. In terms of domain architecture, SH3 3 spans 190–252 (QVLHVVQALY…PKNYVTIMQN (63 aa)). Residues 282-376 (WYYGKVTRHQ…GEKLYLVKHL (95 aa)) form the SH2 domain.

As to quaternary structure, interacts (via SH2 domain and SH3 domain 2) with EGFR. Interacts with PAK1 and SOS1. Interacts (via SH3 domains) with PKN2. Associates with BLNK, PLCG1, VAV1 and NCK1 in a B-cell antigen receptor-dependent fashion. Interacts with SOCS7. This interaction is required for nuclear import. Part of a complex containing PPP1R15B, PP1 and NCK1. Interacts with RALGPS1. Interacts with CAV2 (tyrosine phosphorylated form). Interacts with ADAM15. Interacts with FASLG. Directly interacts with RASA1. Interacts with isoform 4 of MINK1. Interacts with FLT1 (tyrosine phosphorylated). Interacts with KDR (tyrosine phosphorylated). Interacts (via SH2 domain) with EPHB1; activates the JUN cascade to regulate cell adhesion. Interacts with EPHA2. Interacts (via SH2 domain) with PDGFRB (tyrosine phosphorylated). Interacts with the inactive form of EIF2AK2/PKR. Interacts with PTPN1. Interacts with INSR/insulin receptor (in response to insulin stimulation); this interaction may mediate PTPN1 recruitment leading to INSR dephosphorylation. Interacts with CD3E (via Proline-rich sequence); the interaction is ligand dependent but independent of tyrosine kinase activation. Interacts with EGFR. Interacts with IRS1. Post-translationally, phosphorylated on Ser and Tyr residues. Phosphorylated in response to activation of EGFR and FcERI. Phosphorylated by activated PDGFRB.

It localises to the cytoplasm. The protein localises to the endoplasmic reticulum. Its subcellular location is the nucleus. Its function is as follows. Adapter protein which associates with tyrosine-phosphorylated growth factor receptors, such as KDR and PDGFRB, or their cellular substrates. Maintains low levels of EIF2S1 phosphorylation by promoting its dephosphorylation by PP1. Plays a role in the DNA damage response, not in the detection of the damage by ATM/ATR, but for efficient activation of downstream effectors, such as that of CHEK2. Plays a role in ELK1-dependent transcriptional activation in response to activated Ras signaling. Modulates the activation of EIF2AK2/PKR by dsRNA. May play a role in cell adhesion and migration through interaction with ephrin receptors. Also acts as an adpater protein for the T cell receptor complex (TCR-CD3E). Upon ligand engagement, is recruited by CD3E and promotes maturation of the immune synapse and T cell activation. In Mus musculus (Mouse), this protein is SH2/SH3 adapter protein Nck1 (Nck1).